Reading from the N-terminus, the 869-residue chain is Bifunctional uridylyltransferase/uridylyl-removing enzyme (869 aa).

Positions 1 to 332 are uridylyltransferase; that stretch reads MTATPADRPD…QFDGEAVPVQ (332 aa). Positions 333-691 are uridylyl-removing; the sequence is LDAGFSLRRG…RRAVPDNDAL (359 aa). The HD domain occupies 450–572; it reads VDQHTLMVLR…VGTRERLDYL (123 aa). ACT domains are found at residues 692–771 and 798–869; these read EVFV…PSRR and RISL…LDPT.

Belongs to the GlnD family. Mg(2+) is required as a cofactor.

It carries out the reaction [protein-PII]-L-tyrosine + UTP = [protein-PII]-uridylyl-L-tyrosine + diphosphate. It catalyses the reaction [protein-PII]-uridylyl-L-tyrosine + H2O = [protein-PII]-L-tyrosine + UMP + H(+). Uridylyltransferase (UTase) activity is inhibited by glutamine, while glutamine activates uridylyl-removing (UR) activity. Its function is as follows. Modifies, by uridylylation and deuridylylation, the PII regulatory proteins (GlnB and homologs), in response to the nitrogen status of the cell that GlnD senses through the glutamine level. Under low glutamine levels, catalyzes the conversion of the PII proteins and UTP to PII-UMP and PPi, while under higher glutamine levels, GlnD hydrolyzes PII-UMP to PII and UMP (deuridylylation). Thus, controls uridylylation state and activity of the PII proteins, and plays an important role in the regulation of nitrogen assimilation and metabolism. The chain is Bifunctional uridylyltransferase/uridylyl-removing enzyme from Xanthomonas campestris pv. campestris (strain B100).